The sequence spans 164 residues: Large ribosomal subunit protein uL11 (164 aa).

This sequence belongs to the universal ribosomal protein uL11 family. Part of the ribosomal stalk of the 50S ribosomal subunit. Interacts with L10 and the large rRNA to form the base of the stalk. L10 forms an elongated spine to which L12 dimers bind in a sequential fashion forming a multimeric L10(L12)X complex.

Forms part of the ribosomal stalk which helps the ribosome interact with GTP-bound translation factors. The sequence is that of Large ribosomal subunit protein uL11 from Pyrococcus furiosus (strain ATCC 43587 / DSM 3638 / JCM 8422 / Vc1).